The primary structure comprises 313 residues: Ribosomal RNA small subunit methyltransferase H (313 aa).

S-adenosyl-L-methionine is bound by residues G33 to H35, D53, F80, D102, and Q109. Residues S291–R313 form a disordered region.

This sequence belongs to the methyltransferase superfamily. RsmH family.

It localises to the cytoplasm. It catalyses the reaction cytidine(1402) in 16S rRNA + S-adenosyl-L-methionine = N(4)-methylcytidine(1402) in 16S rRNA + S-adenosyl-L-homocysteine + H(+). Specifically methylates the N4 position of cytidine in position 1402 (C1402) of 16S rRNA. In Heliobacterium modesticaldum (strain ATCC 51547 / Ice1), this protein is Ribosomal RNA small subunit methyltransferase H.